The primary structure comprises 66 residues: Rho-elapitoxin-Da1b (66 aa).

Disulfide bonds link Cys3–Cys24, Cys17–Cys42, Cys46–Cys58, and Cys59–Cys64.

This sequence belongs to the three-finger toxin family. Short-chain subfamily. Aminergic toxin sub-subfamily. Expressed by the venom gland.

The protein resides in the secreted. Its function is as follows. Non-competitive antagonist of alpha-2 adrenergic receptors (ADRA2) in smooth muscles, and partial antagonist of D3 dopamine receptors (DRD3) (inhibits 25% of methylspiperone binding to this receptor). Also shows a low antagonism on D2 dopamine receptors (DRD2) (short isoform). Shows high affinity to adrenergic receptors (Ki=14 nM (ADRA2A), Ki=73 nM (ADRA2B), and Ki=38 nM (ADRA2C)). Increases heart rate and blood catecholamine concentrations. This is Rho-elapitoxin-Da1b from Dendroaspis angusticeps (Eastern green mamba).